The chain runs to 381 residues: Endolytic peptidoglycan transglycosylase RlpA (381 aa).

The N-terminal stretch at 1-19 (MRKQLPVICVAAGIVLLAA) is a signal peptide. The N-palmitoyl cysteine moiety is linked to residue C20. A lipid anchor (S-diacylglycerol cysteine) is attached at C20. The disordered stretch occupies residues 196 to 274 (LPPRPDLSGG…QPAPVSAPVA (79 aa)). Low complexity predominate over residues 208–218 (SASSAPAQPQG). Positions 304–380 (AAASGRFVVQ…AQLQSFIASA (77 aa)) constitute an SPOR domain.

The protein belongs to the RlpA family.

Its subcellular location is the cell membrane. In terms of biological role, lytic transglycosylase with a strong preference for naked glycan strands that lack stem peptides. The chain is Endolytic peptidoglycan transglycosylase RlpA from Salmonella typhimurium (strain LT2 / SGSC1412 / ATCC 700720).